The sequence spans 186 residues: Photosystem I assembly protein Ycf4 (186 aa).

2 consecutive transmembrane segments (helical) span residues 22–42 and 57–77; these read FCWA…GTSS and IIFF…LFIS.

The protein belongs to the Ycf4 family.

The protein localises to the plastid. It localises to the chloroplast thylakoid membrane. Its function is as follows. Seems to be required for the assembly of the photosystem I complex. The sequence is that of Photosystem I assembly protein Ycf4 from Dioscorea elephantipes (Elephant's foot yam).